We begin with the raw amino-acid sequence, 334 residues long: Geranylgeranyl pyrophosphate synthase ltmG (334 aa).

Isopentenyl diphosphate-binding residues include Lys53, Arg56, and His85. Mg(2+)-binding residues include Asp92 and Asp96. Arg101 is a dimethylallyl diphosphate binding site. Isopentenyl diphosphate is bound at residue Arg102. Dimethylallyl diphosphate contacts are provided by Lys179, Thr180, and Gln213. Asp216 provides a ligand contact to Mg(2+). Dimethylallyl diphosphate contacts are provided by Asn220, Lys230, and Lys240.

This sequence belongs to the FPP/GGPP synthase family. Mg(2+) is required as a cofactor.

The catalysed reaction is isopentenyl diphosphate + dimethylallyl diphosphate = (2E)-geranyl diphosphate + diphosphate. It catalyses the reaction isopentenyl diphosphate + (2E)-geranyl diphosphate = (2E,6E)-farnesyl diphosphate + diphosphate. It carries out the reaction isopentenyl diphosphate + (2E,6E)-farnesyl diphosphate = (2E,6E,10E)-geranylgeranyl diphosphate + diphosphate. Its pathway is secondary metabolite biosynthesis. In terms of biological role, geranylgeranyl pyrophosphate synthase; part of the gene cluster that mediates the biosynthesis of lolitrems, indole-diterpene mycotoxins that are potent tremorgens in mammals, and are synthesized by clavicipitaceous fungal endophytes in association with their grass hosts. The geranylgeranyl diphosphate (GGPP) synthase ltmG is proposed to catalyze the first step in lolitrem biosynthesis. LtmG catalyzes a series of iterative condensations of isopentenyl diphosphate (IPP) with dimethylallyl diphosphate (DMAPP), geranyl diphosphate (GPP), and farnesyl diphosphate (FPP), to form GGPP. GGPP then condenses with indole-3-glycerol phosphate to form 3-geranylgeranylindole, an acyclic intermediate, to be incorporated into paxilline. Either ltmG or ltmC could be responsible for this step, as both are putative prenyl transferases. The FAD-dependent monooxygenase ltmM then catalyzes the epoxidation of the two terminal alkenes of the geranylgeranyl moiety, which is subsequently cyclized by ltmB, to paspaline. The cytochrome P450 monooxygenases ltmQ and ltmP can sequentially oxidize paspaline to terpendole E and terpendole F. Alternatively, ltmP converts paspaline to an intermediate which is oxidized by ltmQ to terpendole F. LtmF, ltmK, ltmE and ltmJ appear to be unique to the epichloe endophytes. The prenyltransferase ltmF is involved in the 27-hydroxyl-O-prenylation. The cytochrome P450 monooxygenase ltmK is required for the oxidative acetal ring formation. The multi-functional prenyltransferase ltmE is required for C20- and C21-prenylations of the indole ring of paspalanes and acts together with the cytochrome P450 monooxygenase ltmJ to yield lolitremanes by multiple oxidations and ring closures. The stereoisomer pairs of lolitriol and lolitrem N or lolitrem B and lolitrem F may be attributed to variations in the way in which ring closure can occur under the action of ltmJ. While the major product of this pathway is lolitrem B, the prenyl transferases and cytochrome P450 monooxygenases identified in this pathway have a remarkable versatility in their regio- and stereo-specificities to generate a diverse range of metabolites that are products of a metabolic grid rather than a linear pathway. The polypeptide is Geranylgeranyl pyrophosphate synthase ltmG (Epichloe festucae (strain Fl1)).